We begin with the raw amino-acid sequence, 156 residues long: V-type proton ATPase 16 kDa proteolipid subunit c (156 aa).

The Lumenal segment spans residues Met1–Tyr7. Residues Gly8–Gly30 form a helical membrane-spanning segment. At Thr31–Ser52 the chain is on the cytoplasmic side. Residues Ile53–Ile73 traverse the membrane as a helical segment. The Lumenal segment spans residues Ala74 to His92. A helical membrane pass occupies residues Leu93–Gly114. At Asp115–Arg126 the chain is on the cytoplasmic side. A helical membrane pass occupies residues Leu127 to Leu152. Topologically, residues Tyr153–Gln156 are lumenal.

It belongs to the V-ATPase proteolipid subunit family. In terms of assembly, V-ATPase is a heteromultimeric enzyme made up of two complexes: the ATP-hydrolytic V1 complex and the proton translocation V0 complex. The V1 complex consists of three catalytic AB heterodimers that form a heterohexamer, three peripheral stalks each consisting of EG heterodimers, one central rotor including subunits D and F, and the regulatory subunits C and H. The proton translocation complex V0 consists of the proton transport subunit a, a ring of proteolipid subunits c9c'', rotary subunit d, subunits e and f, and the accessory subunits VhaAC45 and ATP6AP2.

The protein resides in the membrane. Functionally, proton-conducting pore forming subunit of the V0 complex of vacuolar(H+)-ATPase (V-ATPase), a multisubunit enzyme composed of a peripheral complex (V1) that hydrolyzes ATP and a membrane integral complex (V0) that translocates protons. V-ATPase is responsible for acidifying and maintaining the pH of intracellular compartments and in some cell types, is targeted to the plasma membrane, where it is responsible for acidifying the extracellular environment. The polypeptide is V-type proton ATPase 16 kDa proteolipid subunit c (VHA16) (Manduca sexta (Tobacco hawkmoth)).